The following is a 199-amino-acid chain: SCO2-like protein RBE_0029 (199 aa).

This sequence belongs to the SCO1/2 family.

The sequence is that of SCO2-like protein RBE_0029 from Rickettsia bellii (strain RML369-C).